A 470-amino-acid chain; its full sequence is Synaptotagmin-17 (470 aa).

A disordered region spans residues 54–112 (PPWLMASRSNDKDGDSVHTASDVPLTPRTNSPDGRRSSSDTSKSTYSLTRRISSLDSRR). The segment covering 92 to 112 (SDTSKSTYSLTRRISSLDSRR) has biased composition (low complexity). Ser114 and Ser115 each carry phosphoserine. C2 domains lie at 180–306 (QLGM…HWWK) and 317–451 (ELGE…EQWH).

It belongs to the synaptotagmin family.

It is found in the membrane. Functionally, plays a role in dendrite formation by melanocytes. The sequence is that of Synaptotagmin-17 (Syt17) from Mus musculus (Mouse).